The following is a 436-amino-acid chain: Glutamyl-tRNA reductase (436 aa).

Residues 56–59 (TCNR), serine 114, 119–121 (EAQ), and glutamine 125 contribute to the substrate site. Cysteine 57 functions as the Nucleophile in the catalytic mechanism. 194-199 (GAGEMI) is a binding site for NADP(+).

The protein belongs to the glutamyl-tRNA reductase family. In terms of assembly, homodimer.

It catalyses the reaction (S)-4-amino-5-oxopentanoate + tRNA(Glu) + NADP(+) = L-glutamyl-tRNA(Glu) + NADPH + H(+). It participates in porphyrin-containing compound metabolism; protoporphyrin-IX biosynthesis; 5-aminolevulinate from L-glutamyl-tRNA(Glu): step 1/2. In terms of biological role, catalyzes the NADPH-dependent reduction of glutamyl-tRNA(Glu) to glutamate 1-semialdehyde (GSA). In Acidovorax sp. (strain JS42), this protein is Glutamyl-tRNA reductase.